Reading from the N-terminus, the 152-residue chain is Ribosomal RNA large subunit methyltransferase H (152 aa).

S-adenosyl-L-methionine-binding positions include leucine 68, glycine 100, and 119–124 (LGVMTW).

The protein belongs to the RNA methyltransferase RlmH family. Homodimer.

Its subcellular location is the cytoplasm. The catalysed reaction is pseudouridine(1915) in 23S rRNA + S-adenosyl-L-methionine = N(3)-methylpseudouridine(1915) in 23S rRNA + S-adenosyl-L-homocysteine + H(+). Its function is as follows. Specifically methylates the pseudouridine at position 1915 (m3Psi1915) in 23S rRNA. This Rhodospirillum rubrum (strain ATCC 11170 / ATH 1.1.1 / DSM 467 / LMG 4362 / NCIMB 8255 / S1) protein is Ribosomal RNA large subunit methyltransferase H.